Consider the following 363-residue polypeptide: tRNA/tmRNA (uracil-C(5))-methyltransferase (363 aa).

S-adenosyl-L-methionine-binding residues include glutamine 187, tyrosine 215, asparagine 220, glutamate 236, and aspartate 296. The Nucleophile role is filled by cysteine 321. Glutamate 355 (proton acceptor) is an active-site residue.

Belongs to the class I-like SAM-binding methyltransferase superfamily. RNA M5U methyltransferase family. TrmA subfamily.

The enzyme catalyses uridine(54) in tRNA + S-adenosyl-L-methionine = 5-methyluridine(54) in tRNA + S-adenosyl-L-homocysteine + H(+). It catalyses the reaction uridine(341) in tmRNA + S-adenosyl-L-methionine = 5-methyluridine(341) in tmRNA + S-adenosyl-L-homocysteine + H(+). Dual-specificity methyltransferase that catalyzes the formation of 5-methyluridine at position 54 (m5U54) in all tRNAs, and that of position 341 (m5U341) in tmRNA (transfer-mRNA). This Pseudomonas aeruginosa (strain ATCC 15692 / DSM 22644 / CIP 104116 / JCM 14847 / LMG 12228 / 1C / PRS 101 / PAO1) protein is tRNA/tmRNA (uracil-C(5))-methyltransferase.